Reading from the N-terminus, the 249-residue chain is Early E1A protein (249 aa).

The interval 38–46 (MSLHDLFDV) is interaction with RB1 in competition with E2F1. The tract at residues 74 to 131 (SAAESGSGDSGVGEELLPVDLDLKCYEDGLPPSDPETDEATEAEEEAAMPTYVNENEN) is interaction with UBE2I. The LXCXE motif, interaction with host RB1 and TMEM173/STING signature appears at 96–100 (LKCYE). Residues 145 to 165 (CRACDFHRGTSGNPEAMCALC) fold into a zinc finger. Residues 180 to 203 (DAEGESESGSPEDTDFPHPLTATP) are disordered. The segment covering 181 to 193 (AEGESESGSPEDT) has biased composition (acidic residues). The PXDLS motif, CTBP-binding motif lies at 238 to 242 (PLNLS). Residues 244-248 (KRPKC) carry the Nuclear localization signal motif.

This sequence belongs to the adenoviridae E1A protein family. In terms of assembly, interacts with host UBE2I; this interaction interferes with polySUMOylation. Interacts with host RB1; this interaction induces the aberrant dissociation of RB1-E2F1 complex thereby disrupting the activity of RB1 and activating E2F1-regulated genes. Interacts with host ATF7; the interaction enhances ATF7-mediated viral transactivation activity which requires the zinc binding domains of both proteins. Isoform early E1A 32 kDa protein and isoform early E1A 26 kDa protein interact (via N-terminus) with CUL1 and E3 ubiquitin ligase RBX1; these interactions inhibit RBX1-CUL1-dependent elongation reaction of ubiquitin chains and attenuate ubiquitination of SCF(FBXW7) target proteins. Interacts (via PXLXP motif) with host ZMYND11/BS69 (via MYND-type zinc finger); this interaction inhibits E1A mediated transactivation. Interacts with host EP300; this interaction stimulates the acetylation of RB1 by recruiting EP300 and RB1 into a multimeric-protein complex. Interacts with host CTBP1 and CTBP2; this interaction seems to potentiate viral replication. Interacts with host DCAF7. Interacts with host DYRK1A. Interacts with host KPNA4; this interaction allows E1A import into the host nucleus. Interacts with host EP400; this interaction stabilizes MYC. Interacts with host TBP protein; this interaction probably disrupts the TBP-TATA complex. Interacts (via LXCXE motif) with host TMEM173/STING; this interaction impairs the ability of TMEM173/STING to sense cytosolic DNA and promote the production of type I interferon (IFN-alpha and IFN-beta). Interacts (via C-terminus) with host ZBED1/hDREF (via C-terminus); the interaction is direct.

It is found in the host nucleus. Functionally, plays a role in viral genome replication by driving entry of quiescent cells into the cell cycle. Stimulation of progression from G1 to S phase allows the virus to efficiently use the cellular DNA replicating machinery to achieve viral genome replication. E1A protein has both transforming and trans-activating activities. Induces the disassembly of the E2F1 transcription factor from RB1 by direct competition for the same binding site on RB1, with subsequent transcriptional activation of E2F1-regulated S-phase genes and of the E2 region of the adenoviral genome. Release of E2F1 leads to the ARF-mediated inhibition of MDM2 and causes TP53/p53 to accumulate because it is not targeted for degradation by MDM2-mediated ubiquitination anymore. This increase in TP53, in turn, would arrest the cell proliferation and direct its death but this effect is counteracted by the viral protein E1B-55K. Inactivation of the ability of RB1 to arrest the cell cycle is critical for cellular transformation, uncontrolled cellular growth and proliferation induced by viral infection. Interaction with RBX1 and CUL1 inhibits ubiquitination of the proteins targeted by SCF(FBXW7) ubiquitin ligase complex, and may be linked to unregulated host cell proliferation. The tumorigenesis-restraining activity of E1A may be related to the disruption of the host CtBP-CtIP complex through the CtBP binding motif. Interaction with host TMEM173/STING impairs the ability of TMEM173/STING to sense cytosolic DNA and promote the production of type I interferon (IFN-alpha and IFN-beta). Promotes the sumoylation of host ZBED1/hDREF with SUMO1. In Homo sapiens (Human), this protein is Early E1A protein.